The following is a 1278-amino-acid chain: MNGDGAREGDSVSHEPSTSKSPKEGEETKKEEKSEEKANTVPFYKLFAFADSSDVLLMICGSIGAIGNGMSLPFMTLLFGDLIDSFGKNQNNKDIVDVVSKVCLKFVYLGLGTLGAAFLQVACWMITGERQAARIRSTYLKTILRQDIGFFDVETNTGEVVGRMSGDTVLIQDAMGEKVGKFIQLVSTFVGGFVLAFIKGWLLTLVMLTSIPLLAMAGAAMALIVTRASSRGQAAYAKAATVVEQTIGSIRTVASFTGEKQAINSYKKFITSAYKSSIQQGFSTGLGLGVMFFVFFSSYALAIWFGGKMILEKGYTGGAVINVIIIVVAGSMSLGQTSPCVTAFAAGQAAAYKMFETIKRKPLIDAYDVNGKVLEDIRGDIELKDVHFSYPARPDEEIFDGFSLFIPSGATAALVGESGSGKSTVISLIERFYDPKSGAVLIDGVNLKEFQLKWIRSKIGLVSQEPVLFSSSIMENIAYGKENATVEEIKAATELANAAKFIDKLPQGLDTMVGEHGTQLSGGQKQRIAIARAILKDPRILLLDEATSALDAESERVVQEALDRVMVNRTTVIVAHRLSTVRNADMIAVIHRGKMVEKGSHSELLKDSEGAYSQLIRLQEINKDVKTSELSSGSSFRNSNLKKSMEGTSSVGNSSRHHSLNVLGLTTGLDLGSHSQRAGQDETGTASQEPLPKVSLTRIAALNKPEIPVLLLGTVAAAINGAIFPLFGILISRVIEAFFKPAHELKRDSRFWAIIFVALGVTSLIVSPTQMYLFAVAGGKLIRRIRSMCFEKAVHMEVAWFDEPQNSSGTMGARLSADATLIRALVGDALSLAVQNVASAASGLIIAFTASWELALIILVMLPLIGINGFVQVKFMKGFSADAKSKYEEASQVANDAVGSIRTVASFCAEEKVMQMYKKQCEGPIKDGIKQGFISGLGFGFSFFILFCVYATSFYAGARLVEDGKTTFNNVFQVFFALTMAAIGISQSSTFAPDSSKAKVAAASIFAIIDRKSKIDSSDETGTVLENVKGDIELRHLSFTYPARPDIQIFRDLCLTIRAGKTVALVGESGSGKSTVISLLQRFYDPDSGHITLDGVELKKLQLKWLRQQMGLVGQEPVLFNDTIRANIAYGKGSEEAATESEIIAAAELANAHKFISSIQQGYDTVVGERGIQLSGGQKQRVAIARAIVKEPKILLLDEATSALDAESERVVQDALDRVMVNRTTIVVAHRLSTIKNADVIAVVKNGVIAEKGTHETLIKIEGGVYASLVQLHMTASN.

2 stretches are compositionally biased toward basic and acidic residues: residues 1–13 (MNGD…DSVS) and 21–35 (SPKE…EKSE). The segment at 1–35 (MNGDGAREGDSVSHEPSTSKSPKEGEETKKEEKSE) is disordered. A run of 6 helical transmembrane segments spans residues 55 to 75 (VLLM…LPFM), 106 to 126 (FVYL…CWMI), 182 to 202 (FIQL…KGWL), 205 to 225 (LVML…ALIV), 285 to 305 (GLGL…AIWF), and 314 to 334 (GYTG…SMSL). One can recognise an ABC transmembrane type-1 1 domain in the interval 58–346 (MICGSIGAIG…TSPCVTAFAA (289 aa)). Residues 381 to 617 (IELKDVHFSY…SEGAYSQLIR (237 aa)) form the ABC transporter 1 domain. 416–423 (GESGSGKS) contributes to the ATP binding site. 3 N-linked (GlcNAc...) asparagine glycosylation sites follow: Asn483, Asn568, and Asn653. Polar residues predominate over residues 629–654 (ELSSGSSFRNSNLKKSMEGTSSVGNS). The interval 629-656 (ELSSGSSFRNSNLKKSMEGTSSVGNSSR) is disordered. An ABC transmembrane type-1 2 domain is found at 710-997 (LLLGTVAAAI…SSTFAPDSSK (288 aa)). A run of 2 helical transmembrane segments spans residues 711–731 (LLGT…GILI) and 751–771 (FWAI…PTQM). N-linked (GlcNAc...) asparagine glycosylation is present at Asn806. 4 helical membrane passes run 824–844 (ALVG…ASGL), 845–865 (IIAF…LPLI), 932–952 (GFIS…VYAT), and 971–991 (VFQV…SSTF). An ABC transporter 2 domain is found at 1032-1271 (IELRHLSFTY…EGGVYASLVQ (240 aa)). An ATP-binding site is contributed by 1067–1074 (GESGSGKS). Asn1121 and Asn1222 each carry an N-linked (GlcNAc...) asparagine glycan.

This sequence belongs to the ABC transporter superfamily. ABCB family. Multidrug resistance exporter (TC 3.A.1.201) subfamily. As to expression, present in roots and flower buds.

It localises to the membrane. The enzyme catalyses (indol-3-yl)acetate(in) + ATP + H2O = (indol-3-yl)acetate(out) + ADP + phosphate + H(+). Functionally, involved in the regulation of auxin transport required for pistil elongation. The chain is ABC transporter B family member 11 from Arabidopsis thaliana (Mouse-ear cress).